A 115-amino-acid chain; its full sequence is NADH-ubiquinone oxidoreductase chain 3 (115 aa).

3 helical membrane passes run 4-24 (LITMTVNSALSFCLISIAFWL), 55-75 (FFLVGITFLLFDLEIALLLPL), and 87-107 (TMMVSFMFVSILALGLAYEWL).

The protein belongs to the complex I subunit 3 family. In terms of assembly, core subunit of respiratory chain NADH dehydrogenase (Complex I) which is composed of 45 different subunits. Interacts with TMEM186. Interacts with TMEM242.

It is found in the mitochondrion inner membrane. It carries out the reaction a ubiquinone + NADH + 5 H(+)(in) = a ubiquinol + NAD(+) + 4 H(+)(out). Core subunit of the mitochondrial membrane respiratory chain NADH dehydrogenase (Complex I) which catalyzes electron transfer from NADH through the respiratory chain, using ubiquinone as an electron acceptor. Essential for the catalytic activity of complex I. The chain is NADH-ubiquinone oxidoreductase chain 3 from Notiomys edwardsii (Edwards's long-clawed mouse).